A 205-amino-acid polypeptide reads, in one-letter code: Photosystem I assembly protein Ycf4 (205 aa).

Transmembrane regions (helical) follow at residues 23-43 (WATV…SSYI) and 86-106 (LMCF…CLIF).

Belongs to the Ycf4 family.

The protein resides in the plastid. The protein localises to the chloroplast thylakoid membrane. Its function is as follows. Seems to be required for the assembly of the photosystem I complex. This is Photosystem I assembly protein Ycf4 from Tetradesmus obliquus (Green alga).